The chain runs to 751 residues: Photosystem I P700 chlorophyll a apoprotein A1 (751 aa).

The next 8 membrane-spanning stretches (helical) occupy residues 72–95 (IFSAHFGHLAVVFVWLSGMYFHGA), 158–181 (LYCTAIGGLVMAALMLFAGWFHYH), 197–221 (MNHHLAGLLGLGSLGWAGHQIHVSL), 293–311 (TAHHHLAIAVLFIIAGHMY), 348–371 (WHAQLAINLAMLGSLTIIVAHHMY), 387–413 (LSLFTHHMWIGGFLIVGAGAHGAIFMV), 435–457 (AIISHLNWVCIFLGFHSFGLYVH), and 532–550 (FLVHHIHAFTIHVTVLILL). [4Fe-4S] cluster contacts are provided by cysteine 574 and cysteine 583. Transmembrane regions (helical) follow at residues 590–611 (HVFLGLFWMYNSLSIVIFHFSW) and 665–687 (LSAYGIMFLAGHFVFAFSLMFLF). Residue histidine 676 coordinates chlorophyll a'. Residues methionine 684 and tyrosine 692 each contribute to the chlorophyll a site. Tryptophan 693 contacts phylloquinone. A helical transmembrane segment spans residues 725–745 (AVGVTHYLLGGIVTTWAFFLA).

This sequence belongs to the PsaA/PsaB family. The PsaA/B heterodimer binds the P700 chlorophyll special pair and subsequent electron acceptors. PSI consists of a core antenna complex that captures photons, and an electron transfer chain that converts photonic excitation into a charge separation. The cyanobacterial PSI reaction center is composed of one copy each of PsaA,B,C,D,E,F,I,J,K,L,M and X, and forms trimeric complexes. Requires PSI electron transfer chain: 5 chlorophyll a, 1 chlorophyll a', 2 phylloquinones and 3 4Fe-4S clusters. PSI core antenna: 90 chlorophyll a, 22 carotenoids, 3 phospholipids and 1 galactolipid. P700 is a chlorophyll a/chlorophyll a' dimer, A0 is one or more chlorophyll a, A1 is one or both phylloquinones and FX is a shared 4Fe-4S iron-sulfur center. as cofactor.

It localises to the cellular thylakoid membrane. It carries out the reaction reduced [plastocyanin] + hnu + oxidized [2Fe-2S]-[ferredoxin] = oxidized [plastocyanin] + reduced [2Fe-2S]-[ferredoxin]. PsaA and PsaB bind P700, the primary electron donor of photosystem I (PSI), as well as the electron acceptors A0, A1 and FX. PSI is a plastocyanin/cytochrome c6-ferredoxin oxidoreductase, converting photonic excitation into a charge separation, which transfers an electron from the donor P700 chlorophyll pair to the spectroscopically characterized acceptors A0, A1, FX, FA and FB in turn. Oxidized P700 is reduced on the lumenal side of the thylakoid membrane by plastocyanin or cytochrome c6. This is Photosystem I P700 chlorophyll a apoprotein A1 from Gloeothece citriformis (strain PCC 7424) (Cyanothece sp. (strain PCC 7424)).